We begin with the raw amino-acid sequence, 66 residues long: Large ribosomal subunit protein bL35 (66 aa).

Composition is skewed to basic residues over residues 1 to 15 (MPKLKTKSGAKKRFK) and 27 to 40 (AGKRHGMIKRTKKQ). A disordered region spans residues 1–40 (MPKLKTKSGAKKRFKVTGTGKVMSAHAGKRHGMIKRTKKQ).

This sequence belongs to the bacterial ribosomal protein bL35 family.

The protein is Large ribosomal subunit protein bL35 of Rhodopseudomonas palustris (strain BisA53).